Consider the following 238-residue polypeptide: Ribonuclease PH (238 aa).

Phosphate contacts are provided by residues Arg86 and 124–126 (GTR).

The protein belongs to the RNase PH family. As to quaternary structure, homohexameric ring arranged as a trimer of dimers.

It carries out the reaction tRNA(n+1) + phosphate = tRNA(n) + a ribonucleoside 5'-diphosphate. Its function is as follows. Phosphorolytic 3'-5' exoribonuclease that plays an important role in tRNA 3'-end maturation. Removes nucleotide residues following the 3'-CCA terminus of tRNAs; can also add nucleotides to the ends of RNA molecules by using nucleoside diphosphates as substrates, but this may not be physiologically important. Probably plays a role in initiation of 16S rRNA degradation (leading to ribosome degradation) during starvation. In Edwardsiella ictaluri (strain 93-146), this protein is Ribonuclease PH.